The sequence spans 145 residues: Anaerobic nitrite reductase NSHB5 (145 aa).

Positions 2 to 142 (GFSETQEELV…LAAAIKEEMK (141 aa)) constitute a Globin domain. Positions 35-39 (EIAPA) match the Homodimerization motif. Heme b-binding residues include serine 45, histidine 59, lysine 61, arginine 84, threonine 88, and histidine 89. Positions 96 to 108 (DAHFEVVKTALLD) match the Homodimerization motif.

This sequence belongs to the plant globin family. Homodimer. The cofactor is heme b. In terms of tissue distribution, expressed in embryonic (embryos, coleoptiles and seminal roots) and vegetative (leaves and roots) organs.

It localises to the cytoplasm. The protein localises to the nucleus. The enzyme catalyses Fe(III)-heme b-[protein] + nitric oxide + H2O = Fe(II)-heme b-[protein] + nitrite + 2 H(+). In terms of biological role, phytoglobin that reduces nitrite to nitric oxide under anoxic conditions (e.g. during flooding or in waterlogged soil). May not function as an oxygen storage or transport protein. Has an unusually high affinity for O(2) through an hexacoordinate heme iron because of a very low dissociation constant. The sequence is that of Anaerobic nitrite reductase NSHB5 from Oryza sativa subsp. indica (Rice).